A 120-amino-acid polypeptide reads, in one-letter code: Large ribosomal subunit protein uL18 (120 aa).

It belongs to the universal ribosomal protein uL18 family. As to quaternary structure, part of the 50S ribosomal subunit; part of the 5S rRNA/L5/L18/L25 subcomplex. Contacts the 5S and 23S rRNAs.

This is one of the proteins that bind and probably mediate the attachment of the 5S RNA into the large ribosomal subunit, where it forms part of the central protuberance. This is Large ribosomal subunit protein uL18 from Methylobacterium sp. (strain 4-46).